We begin with the raw amino-acid sequence, 296 residues long: Immediate early response gene 5-like protein (296 aa).

The protein belongs to the IER family.

The protein is Immediate early response gene 5-like protein (ier5l) of Xenopus tropicalis (Western clawed frog).